Consider the following 473-residue polypeptide: Anthocyanidin 5,3-O-glucosyltransferase (473 aa).

It belongs to the UDP-glycosyltransferase family.

It functions in the pathway pigment biosynthesis; anthocyanin biosynthesis. Its function is as follows. Sequentially catalyzes two glycosylation steps at the 5-OH and 3-OH positions of anthocyanidin. Unglycosylated anthocyanidin or anthocyanidin 5-O-glucoside, but not anthocyanidin 3-O-glucoside, can be used as glucosyl acceptor. The polypeptide is Anthocyanidin 5,3-O-glucosyltransferase (RhGT1) (Rosa hybrid cultivar).